The primary structure comprises 231 residues: (S)-2-haloacid dehalogenase 4A (231 aa).

Aspartate 11 functions as the Nucleophile in the catalytic mechanism. An (S)-2-haloacid contacts are provided by residues 12–13 (AY), arginine 42, and 119–120 (SN). Positions 176–181 (SSNAWD) are important for catalytic activity.

This sequence belongs to the HAD-like hydrolase superfamily. S-2-haloalkanoic acid dehalogenase family.

The enzyme catalyses an (S)-2-haloacid + H2O = a (2R)-2-hydroxycarboxylate + a halide anion + H(+). The catalysed reaction is (S)-2-chloropropanoate + H2O = (R)-lactate + chloride + H(+). Catalyzes the hydrolytic dehalogenation of small (S)-2-haloalkanoic acids to yield the corresponding (R)-2-hydroxyalkanoic acids. Acts on acids of short chain lengths, C(2) to C(4), with inversion of configuration at C-3. Active with 2-halogenated carboxylic acids and converts only the S-isomer (or L-isomer) of 2-chloropropionic acid with inversion of configuration to produce R-lactate (or D-isomer). This is (S)-2-haloacid dehalogenase 4A from Burkholderia cepacia (Pseudomonas cepacia).